The primary structure comprises 1218 residues: MSGSRVSDLSKLHLKKELTQIRKAGRVLRDPGTTSSWKSPLDSSRSVALLETPASRNGGSSSQFPIRGESSTNRRGKEKKVFLYNWKTQKSSSEKSGLAKNGKEEEEEEEDASSWTQASVNDDDDVSDARNGGDSYRREIQSASMGFRCRDTNLASQGVSKMRKSNVGSCKKKSKKKISSSRLDCLSKYQPRDDIVARNCNAGSDDTEEELSNSEDLRKVTGASPLLLKLKQKNWSRSSSRLLRANNRKEDSSCTYNSTPALSTSSYNMYAVRNPSTVGSWDGTTTSVNDGDDELDDNLDLPGRQGCGIPCYWTKKAMKHRGGCRSCCSPSFSDTLRRTGSSILCGSQSVYRRHNRHSSGGYSKQKIACRSAQGVLPLLSYGGDGRGGSSLGTGLSDDELSTNYGELDLEAQSRLDGRRWSTSYRSQDGLEAVALDGEEEEGSTPETIRSFSQKYRPMFFEELIGQSIVVQSLMNAVKRSRIAPVYLFQGPRGTGKTSTARIFSAALNCVATEEMKPCGYCKECNDFMSGKSKDFWELDGANKKGADKVRYLLKNLPTILPRNSSMYKVFVIDECHLLPSKTWLSFLKFLENPLQKVVFIFITTDLENVPRTIQSRCQKFLFDKLKDSDIVVRLKKIASDENLDVDLHALDLIAMNADGSLRDAETMLEQLSLLGKRITTALVNELVGVVSDEKLLELLELALSSDTAETVKRARELLDLGADPIVLMSQLASLIMDIIAGTYKVVDEKYSNAFFDGRNLTEADMEGLKHALKLLSEAEKQLRVSNDRSTWFTATLLQLGSMPSPGTTHTGSSRRQSSRATDDDPASVSREVMAYKQRIGGLHFSKSASPASVIKRNGNHSHEAKPFSRVIDNNCYKSSSSSQMIESEGSIASHENSIASTMMLNQRSSEKLNDIWRKCIERCHSKTLRQLLYTHGKLISISEVEGILVAYIAFGENDIKLRAERFLSSITNSIEMVLRRSVEVRIILLPETELLVVPHQTRKPEMTNKSGHLNNIAGLNAETDVEVGSSVESRSKLPMQRIESIIREQRLETAWLQTADKDTPGSIIRVKPERNQILPQEDTYRQTNVASAISSSGLTTHQWVDELNNEVKLLKIGDNGELQENLTGTRGQHCPLSPSLLHDTNFGNNKDNLGGYESGSGRVGCNILFCWNTKKTQRRSKSKQVKGTPVRSRRNRKSRFSLFNGCAKPRKAEGNIRR.

The tract at residues 24 to 136 is disordered; sequence AGRVLRDPGT…SDARNGGDSY (113 aa). Composition is skewed to polar residues over residues 32 to 46, 54 to 73, and 86 to 95; these read GTTS…SSRS, ASRN…SSTN, and WKTQKSSSEK. The short motif at 163 to 180 is the Bipartite nuclear localization signal element; sequence RKSNVGSCKKKSKKKISS. Short sequence motifs (PEST) lie at residues 273–304 and 425–449; these read RNPS…LPGR and RSQD…ETIR. 490 to 497 provides a ligand contact to ATP; the sequence is GPRGTGKT. Zn(2+) is bound by residues Cys509, Cys518, Cys521, and Cys524. Residues 762–788 are a coiled coil; it reads EADMEGLKHALKLLSEAEKQLRVSNDR. Positions 802-828 are disordered; the sequence is MPSPGTTHTGSSRRQSSRATDDDPASV. The segment covering 804–819 has biased composition (polar residues); sequence SPGTTHTGSSRRQSSR. 2 short sequence motifs (bipartite nuclear localization signal) span residues 1178–1195 and 1196–1213; these read RRSK…SRRN and RKSR…RKAE.

It belongs to the DnaX/STICHEL family. In terms of assembly, interacts with BLT. As to expression, ubiquitous.

Its subcellular location is the nucleus. Acts as a key regulator of trichome branching through an endoreduplication-independent pathway. The protein is Protein STICHEL (STI) of Arabidopsis thaliana (Mouse-ear cress).